Reading from the N-terminus, the 74-residue chain is Dermaseptin-B3 (74 aa).

Positions M1 to C22 are cleaved as a signal peptide. The propeptide occupies E23–E43.

As to expression, expressed by the skin glands.

The protein localises to the secreted. Functionally, possesses a potent antimicrobial activity against Gram-positive and Gram-negative bacteria. Probably acts by disturbing membrane functions with its amphipathic structure. This chain is Dermaseptin-B3, found in Phyllomedusa bicolor (Two-colored leaf frog).